The sequence spans 1007 residues: Glutamate receptor ionotropic, delta-2 (1007 aa).

Positions 1-23 (MEVFPFLLVLSVWWSRTWDSANA) are cleaved as a signal peptide. The tract at residues 24–345 (DSIIHIGAIF…NAFHKKLEDR (322 aa)) is interaction with CBLN1 homotrimer. Residues 24-566 (DSIIHIGAIF…DMFACLAPFD (543 aa)) are Extracellular-facing. 3 disulfides stabilise this stretch: Cys-83–Cys-355, Cys-99–Cys-131, and Cys-298–Cys-310. The N-linked (GlcNAc...) asparagine glycan is linked to Asn-293. Asn-426 carries an N-linked (GlcNAc...) asparagine glycan. Residues Glu-531, Val-534, and Asp-535 each contribute to the Ca(2+) site. A helical transmembrane segment spans residues 567–587 (LSLWACIAGTVLLVGLLVYLL). Residues 588 to 635 (NWLNPPRLQMGSMTSTTLYNSMWFVYGSFVQQGGEVPYTTLATRMMMG) lie on the Cytoplasmic side of the membrane. A helical membrane pass occupies residues 636–656 (AWWLFALIVISSYTANLAAFL). The Extracellular portion of the chain corresponds to 657–830 (TITRIESSIQ…QKGGALDIKS (174 aa)). N-linked (GlcNAc...) asparagine glycans are attached at residues Asn-713 and Asn-716. Ca(2+)-binding residues include Asp-753, Asp-755, and Ser-757. Residues 831 to 851 (FAGVFCILAAGIVLSCFIAML) form a helical membrane-spanning segment. At 852-1007 (ETWWNKRKGS…GNDPDRGTSI (156 aa)) the chain is on the cytoplasmic side. Ser-883 is modified (phosphoserine). A Phosphothreonine modification is found at Thr-886. Residue Ser-890 is modified to Phosphoserine. The interval 921 to 991 (DFRNTHITTT…MSSIPYQPTP (71 aa)) is interaction with AP4M1. The PDZ-binding motif lies at 1005-1007 (TSI). The residue at position 1006 (Ser-1006) is a Phosphoserine.

This sequence belongs to the glutamate-gated ion channel (TC 1.A.10.1) family. GRID2 subfamily. Tetramer; dimer of dimers. Interacts with EML2, MAGI2 (via PDZ domains) and AP4M1. Interacts with BECN1, GOPC, GRID2IP, SHANK1 and SHANK2. Interacts with CBLN2, but not with CBLN4. Interacts with CBLN1 (via C1q domain); the interaction is CBLN1-NRX1 complex formation-dependent; CBLN1-binding is calcium-independent; CBLN1 hexamers anchor GRID2 N-terminal domain dimers to monomeric NRXN1 isoform beta; promotes synaptogenesis and mediates the D-Serine-dependent long term depression signals and AMPA receptor endocytosis.

The protein resides in the postsynaptic cell membrane. It catalyses the reaction Ca(2+)(in) = Ca(2+)(out). The catalysed reaction is Na(+)(in) = Na(+)(out). Its function is as follows. Member of the ionotropic glutamate receptor family, which plays a crucial role in synaptic organization and signal transduction in the central nervous system. Although it shares structural features with ionotropic glutamate receptors, does not bind glutamate as a primary ligand. Promotes synaptogenesis and mediates the D-Serine-dependent long term depression signals and AMPA receptor endocytosis of cerebellar parallel fiber-Purkinje cell (PF-PC) synapses through the NRX1B-CBLN1-GRID2 triad complex. In the presence of neurexins and cerebellins, forms cation-selective channels that are proposed to be gated by glycine and D-serine. However, recent research disputes this ligand-gated cation channel activity. Cation-selective ion channel activity can be triggered by GRM1 in Purkinje cells. This Homo sapiens (Human) protein is Glutamate receptor ionotropic, delta-2 (GRID2).